We begin with the raw amino-acid sequence, 415 residues long: Diaminopimelate decarboxylase (415 aa).

Lys-54 carries the post-translational modification N6-(pyridoxal phosphate)lysine. Pyridoxal 5'-phosphate is bound by residues Gly-223 and 264 to 267; that span reads EPGR. Residues Arg-267, Arg-303, and Tyr-307 each coordinate substrate. The active-site Proton donor is the Cys-338. Glu-339 and Tyr-374 together coordinate substrate. Tyr-374 contributes to the pyridoxal 5'-phosphate binding site.

The protein belongs to the Orn/Lys/Arg decarboxylase class-II family. LysA subfamily. In terms of assembly, homodimer. Pyridoxal 5'-phosphate serves as cofactor.

The catalysed reaction is meso-2,6-diaminopimelate + H(+) = L-lysine + CO2. It functions in the pathway amino-acid biosynthesis; L-lysine biosynthesis via DAP pathway; L-lysine from DL-2,6-diaminopimelate: step 1/1. Its function is as follows. Specifically catalyzes the decarboxylation of meso-diaminopimelate (meso-DAP) to L-lysine. The chain is Diaminopimelate decarboxylase from Buchnera aphidicola subsp. Acyrthosiphon pisum (strain APS) (Acyrthosiphon pisum symbiotic bacterium).